Reading from the N-terminus, the 85-residue chain is YcgL domain-containing protein ECA2367 (85 aa).

In terms of domain architecture, YcgL spans Met-1–Val-85.

This is YcgL domain-containing protein ECA2367 from Pectobacterium atrosepticum (strain SCRI 1043 / ATCC BAA-672) (Erwinia carotovora subsp. atroseptica).